A 747-amino-acid polypeptide reads, in one-letter code: Protein O-mannosyl-transferase 1 (747 aa).

9 helical membrane passes run 8–28, 40–60, 68–88, 99–119, 122–142, 154–174, 183–203, 206–226, and 269–289; these read PVVV…MGLL, VVFD…QIFF, FGHM…NFLW, VPVW…VPMA, IVLE…LMLI, LLES…LKFF, SLSW…AVGI, MGVF…WHLL, and LLVI…ILVF. MIR domains are found at residues 318–381, 392–449, and 453–513; these read PLEV…VKDP, PRPV…LEIV, and SDTD…VEEH. 3 N-linked (GlcNAc...) asparagine glycosylation sites follow: Asn-435, Asn-471, and Asn-539. The next 3 helical transmembrane spans lie at 597-617, 636-656, and 661-681; these read IVIW…SLWY, WVLA…PFFL, and LFLY…PVVL.

The protein belongs to the glycosyltransferase 39 family. In terms of assembly, interacts with POMT2. Widely expressed. Highly expressed in testis, heart and pancreas. Detected at lower levels in kidney, skeletal muscle, brain, placenta, lung and liver.

It localises to the endoplasmic reticulum membrane. It catalyses the reaction a di-trans,poly-cis-dolichyl beta-D-mannosyl phosphate + L-seryl-[protein] = 3-O-(alpha-D-mannosyl)-L-seryl-[protein] + a di-trans,poly-cis-dolichyl phosphate + H(+). It carries out the reaction a di-trans,poly-cis-dolichyl beta-D-mannosyl phosphate + L-threonyl-[protein] = 3-O-(alpha-D-mannosyl)-L-threonyl-[protein] + a di-trans,poly-cis-dolichyl phosphate + H(+). It functions in the pathway protein modification; protein glycosylation. Slightly activated by Mg(2+) and inhibited by both Ca(+) and Mn(2+). EDTA ha no effect on activity in vitro. Transfers mannosyl residues to the hydroxyl group of serine or threonine residues. Coexpression of both POMT1 and POMT2 is necessary for enzyme activity, expression of either POMT1 or POMT2 alone is insufficient. Essentially dedicated to O-mannosylation of alpha-DAG1 and few other proteins but not of cadherins and protocaherins. In Homo sapiens (Human), this protein is Protein O-mannosyl-transferase 1 (POMT1).